Reading from the N-terminus, the 2605-residue chain is Protein ABERRANT POLLEN TRANSMISSION 1 (2605 aa).

A signal peptide spans 1-43 (MMLGLVQLLVGFVVAWEAVELVLRHGLLLSVFKLAILAALAAA). Residues 137-158 (STNKKKPAPRKPISTTTAKAKG) are disordered. N-linked (GlcNAc...) asparagine glycans are attached at residues Asn232, Asn320, Asn348, Asn516, Asn587, Asn628, Asn696, Asn779, Asn1171, Asn1318, and Asn1459. Residues 305 to 326 (SASTVAEQKDEPSVDNKSAARS) form a disordered region. The segment covering 311–326 (EQKDEPSVDNKSAARS) has biased composition (basic and acidic residues). Positions 1761-1818 (MSKDGALSSVSSTSQPSEPQQIKSSESPPSNGSGKPDLTSSSENALKRSNNSDSEEEG) are disordered. The span at 1768–1781 (SSVSSTSQPSEPQQ) shows a compositional bias: low complexity. The segment covering 1782 to 1812 (IKSSESPPSNGSGKPDLTSSSENALKRSNNS) has biased composition (polar residues). N-linked (GlcNAc...) asparagine glycosylation is found at Asn1791, Asn1810, Asn2003, Asn2280, and Asn2291. Disordered stretches follow at residues 2269–2312 (VSTT…SSFD) and 2332–2361 (EGQT…REDK). A compositionally biased stretch (polar residues) spans 2281–2300 (TSVAETNSPNNQSSKETTFA). Composition is skewed to basic and acidic residues over residues 2303–2312 (PELRRTSSFD) and 2343–2361 (DAAK…REDK). N-linked (GlcNAc...) asparagine glycosylation is found at Asn2468 and Asn2564. The interval 2574–2605 (TELEVAELPPRAPGYNTDSSSDSSSAETSPKD) is disordered.

The protein belongs to the SABRE family. As to expression, mature pollen-specific.

Its subcellular location is the secreted. It is found in the golgi apparatus. May be involved in membrane trafficking. Required for tip growth in pollen tubes and root hairs. In Zea mays (Maize), this protein is Protein ABERRANT POLLEN TRANSMISSION 1.